The primary structure comprises 359 residues: Dihydroorotate dehydrogenase (quinone) (359 aa).

FMN contacts are provided by residues 68–72 and A92; that span reads AGFDK. K72 contacts substrate. 117 to 121 contributes to the substrate binding site; sequence NAYGF. The FMN site is built by N146 and N179. Residue N179 participates in substrate binding. The Nucleophile role is filled by S182. N184 contacts substrate. The FMN site is built by K215 and T243. Position 244-245 (244-245) interacts with substrate; the sequence is NT. FMN-binding positions include G263, G292, and 313-314; that span reads YT.

This sequence belongs to the dihydroorotate dehydrogenase family. Type 2 subfamily. Monomer. FMN serves as cofactor.

It is found in the cell membrane. The catalysed reaction is (S)-dihydroorotate + a quinone = orotate + a quinol. Its pathway is pyrimidine metabolism; UMP biosynthesis via de novo pathway; orotate from (S)-dihydroorotate (quinone route): step 1/1. Functionally, catalyzes the conversion of dihydroorotate to orotate with quinone as electron acceptor. This chain is Dihydroorotate dehydrogenase (quinone), found in Nautilia profundicola (strain ATCC BAA-1463 / DSM 18972 / AmH).